Reading from the N-terminus, the 245-residue chain is tRNA1(Val) (adenine(37)-N6)-methyltransferase (245 aa).

Belongs to the methyltransferase superfamily. tRNA (adenine-N(6)-)-methyltransferase family.

Its subcellular location is the cytoplasm. It catalyses the reaction adenosine(37) in tRNA1(Val) + S-adenosyl-L-methionine = N(6)-methyladenosine(37) in tRNA1(Val) + S-adenosyl-L-homocysteine + H(+). Specifically methylates the adenine in position 37 of tRNA(1)(Val) (anticodon cmo5UAC). The sequence is that of tRNA1(Val) (adenine(37)-N6)-methyltransferase from Salmonella typhi.